Consider the following 347-residue polypeptide: Quinolinate synthase (347 aa).

Residues H47 and S68 each coordinate iminosuccinate. C113 lines the [4Fe-4S] cluster pocket. Residues 139–141 (YAN) and S156 each bind iminosuccinate. Residue C200 participates in [4Fe-4S] cluster binding. Residues 226-228 (HPE) and T243 each bind iminosuccinate. C297 contributes to the [4Fe-4S] cluster binding site.

Belongs to the quinolinate synthase family. Type 1 subfamily. It depends on [4Fe-4S] cluster as a cofactor.

The protein resides in the cytoplasm. It carries out the reaction iminosuccinate + dihydroxyacetone phosphate = quinolinate + phosphate + 2 H2O + H(+). It functions in the pathway cofactor biosynthesis; NAD(+) biosynthesis; quinolinate from iminoaspartate: step 1/1. Functionally, catalyzes the condensation of iminoaspartate with dihydroxyacetone phosphate to form quinolinate. This chain is Quinolinate synthase, found in Escherichia coli (strain K12 / MC4100 / BW2952).